Here is a 218-residue protein sequence, read N- to C-terminus: Uracil-DNA glycosylase (218 aa).

Asp-60 (proton acceptor) is an active-site residue.

This sequence belongs to the uracil-DNA glycosylase (UDG) superfamily. UNG family.

Its subcellular location is the cytoplasm. The catalysed reaction is Hydrolyzes single-stranded DNA or mismatched double-stranded DNA and polynucleotides, releasing free uracil.. Excises uracil residues from the DNA which can arise as a result of misincorporation of dUMP residues by DNA polymerase or due to deamination of cytosine. The polypeptide is Uracil-DNA glycosylase (Shewanella oneidensis (strain ATCC 700550 / JCM 31522 / CIP 106686 / LMG 19005 / NCIMB 14063 / MR-1)).